The chain runs to 508 residues: ATP synthase subunit alpha, chloroplastic (508 aa).

Position 173-180 (173-180) interacts with ATP; that stretch reads GDRQTGKT.

The protein belongs to the ATPase alpha/beta chains family. F-type ATPases have 2 components, CF(1) - the catalytic core - and CF(0) - the membrane proton channel. CF(1) has five subunits: alpha(3), beta(3), gamma(1), delta(1), epsilon(1). CF(0) has four main subunits: a, b, b' and c.

It localises to the plastid. The protein localises to the chloroplast thylakoid membrane. The catalysed reaction is ATP + H2O + 4 H(+)(in) = ADP + phosphate + 5 H(+)(out). In terms of biological role, produces ATP from ADP in the presence of a proton gradient across the membrane. The alpha chain is a regulatory subunit. In Chara vulgaris (Common stonewort), this protein is ATP synthase subunit alpha, chloroplastic.